A 509-amino-acid polypeptide reads, in one-letter code: MADAEVITFPKKHKKKKDRKPLQEDDVAEIQHAEEFLIKPESKVAQLDTSQWPLLLKNFDKLNVRTAHYTPLPCGSNPLKREIGDYIRTGFINLDKPSNPSSHEVVAWIRRILRVEKTGHSGTLDPKVTGCLIVCIERATRLVKSQQSAGKEYVGIVRLHNAIEGGTQLSRALETLTGALFQRPPLIAAVKRQLRVRTIYESKMIEYDPERRLGIFWVSCEAGTYIRTLCVHLGLLLGVGGQMQELRRVRSGVMSEKDHMVTMHDVLDAQWLYDNHKDESYLRRVVYPLEKLLTSHKRLVMKDSAVNAICYGAKIMLPGLLRYEDGIEVNQEIVVITTKGEAICMAIALMTTAVISTCDHGIVAKIKRVIMERDTYPRKWGLGPKASQKKMMIKQGLLDKHGKPTDNTPATWKQDYIDYSDSGKNTLVTEAVQAPQLAAEAVNVIKRKRDSESESDETPTVPQLKEKKKKKDKKPKTVLESGGETGDGDNDTTKKKKKKKVKVVEEMSE.

The tract at residues Met-1–Glu-24 is disordered. Ala-2 bears the N-acetylalanine mark. Residues Ala-2–Pro-21 are nucleolar localization. The span at Pro-10 to Arg-19 shows a compositional bias: basic residues. Glycyl lysine isopeptide (Lys-Gly) (interchain with G-Cter in SUMO2) cross-links involve residues Lys-20, Lys-39, and Lys-43. Asp-125 functions as the Nucleophile in the catalytic mechanism. A Glycyl lysine isopeptide (Lys-Gly) (interchain with G-Cter in SUMO2) cross-link involves residue Lys-191. In terms of domain architecture, PUA spans Lys-297–Glu-372. Phosphoserine is present on Ser-387. Residue Lys-394 forms a Glycyl lysine isopeptide (Lys-Gly) (interchain with G-Cter in SUMO2) linkage. Lys-413 is covalently cross-linked (Glycyl lysine isopeptide (Lys-Gly) (interchain with G-Cter in SUMO1); alternate). A Glycyl lysine isopeptide (Lys-Gly) (interchain with G-Cter in SUMO2); alternate cross-link involves residue Lys-413. Lys-424 participates in a covalent cross-link: Glycyl lysine isopeptide (Lys-Gly) (interchain with G-Cter in SUMO2). The nuclear and nucleolar localization stretch occupies residues Lys-446–Glu-509. The segment at Arg-447 to Glu-509 is disordered. A phosphoserine mark is found at Ser-451, Ser-453, and Ser-455. Residue Thr-458 is modified to Phosphothreonine. A compositionally biased stretch (basic residues) spans Glu-466–Lys-476. Ser-481 bears the Phosphoserine mark. At Thr-485 the chain carries Phosphothreonine. A Phosphoserine modification is found at Ser-508.

This sequence belongs to the pseudouridine synthase TruB family. Part of the H/ACA small nucleolar ribonucleoprotein (H/ACA snoRNP) complex, which contains NHP2/NOLA2, GAR1/NOLA1, NOP10/NOLA3, and DKC1/NOLA4, which is presumed to be the catalytic subunit. The complex contains a stable core formed by binding of one or two NOP10-DKC1 heterodimers to NHP2; GAR1 subsequently binds to this core via DKC1. The complex binds a box H/ACA small nucleolar RNA (snoRNA), which may target the specific site of modification within the RNA substrate. During assembly, the complex contains NAF1 instead of GAR1/NOLA1. The complex also interacts with TERC, which contains a 3'-terminal domain related to the box H/ACA snoRNAs. Specific interactions with snoRNAs or TERC are mediated by GAR1 and NHP2. Associates with NOLC1/NOPP140. H/ACA snoRNPs interact with the SMN complex, consisting of SMN1 or SMN2, GEMIN2/SIP1, DDX20/GEMIN3, and GEMIN4. This is mediated by interaction between GAR1 and SMN1 or SMN2. The SMN complex may be required for correct assembly of the H/ACA snoRNP complex. Component of the telomerase holoenzyme complex composed of one molecule of TERT, one molecule of WRAP53/TCAB1, two molecules of H/ACA ribonucleoprotein complex subunits DKC1, NOP10, NHP2 and GAR1, and a telomerase RNA template component (TERC). The telomerase holoenzyme complex is associated with TEP1, SMG6/EST1A and POT1. Interacts with SHQ1; this interaction may lead to the stabilization of DKC1, from the time of its synthesis until its association with NOP10, NHP2, and NAF1 at the nascent H/ACA RNA. Interacts with HMBOX1. Interacts with DHX36. As to expression, ubiquitously expressed, with elevated levels in Purkinje cells, the olfactory bulb, and Leydig cells of the testis.

Its subcellular location is the nucleus. It is found in the nucleolus. The protein localises to the cajal body. It carries out the reaction uridine in 5S rRNA = pseudouridine in 5S rRNA. Functionally, catalytic subunit of H/ACA small nucleolar ribonucleoprotein (H/ACA snoRNP) complex, which catalyzes pseudouridylation of rRNA. This involves the isomerization of uridine such that the ribose is subsequently attached to C5, instead of the normal N1. Each rRNA can contain up to 100 pseudouridine ('psi') residues, which may serve to stabilize the conformation of rRNAs. Required for ribosome biogenesis and telomere maintenance. Also required for correct processing or intranuclear trafficking of TERC, the RNA component of the telomerase reverse transcriptase (TERT) holoenzyme. This is H/ACA ribonucleoprotein complex subunit DKC1 (Dkc1) from Mus musculus (Mouse).